We begin with the raw amino-acid sequence, 806 residues long: GPI ethanolamine phosphate transferase 2 (806 aa).

3 N-linked (GlcNAc...) asparagine glycosylation sites follow: Asn-70, Asn-184, and Asn-242. Transmembrane regions (helical) follow at residues 396–416, 425–445, and 451–471; these read MLFL…YCYI, SVLM…SSFV, and IWWW…PSCT. An N-linked (GlcNAc...) asparagine glycan is attached at Asn-488. Helical transmembrane passes span 508 to 528, 532 to 552, 593 to 613, 624 to 644, 664 to 684, 706 to 726, 745 to 765, and 782 to 804; these read PSIK…DGFT, LLSI…TCWA, LFFK…VVFA, LFTI…FLVF, CEMF…QFGG, IYVV…YWSL, LSSM…CICM, and LLGW…LLMV.

Belongs to the PIGG/PIGN/PIGO family. PIGG subfamily.

It is found in the endoplasmic reticulum membrane. Its pathway is glycolipid biosynthesis; glycosylphosphatidylinositol-anchor biosynthesis. In terms of biological role, ethanolamine phosphate transferase involved in glycosylphosphatidylinositol-anchor biosynthesis. Transfers ethanolamine phosphate to the GPI second mannose. This is GPI ethanolamine phosphate transferase 2 (LAS21) from Eremothecium gossypii (strain ATCC 10895 / CBS 109.51 / FGSC 9923 / NRRL Y-1056) (Yeast).